The following is a 232-amino-acid chain: Small ribosomal subunit protein uS3 (232 aa).

A KH type-2 domain is found at Ile-39–Lys-107. Positions Gln-213–Glu-232 are disordered. Residues Gly-222–Glu-232 are compositionally biased toward basic residues.

The protein belongs to the universal ribosomal protein uS3 family. As to quaternary structure, part of the 30S ribosomal subunit. Forms a tight complex with proteins S10 and S14.

Functionally, binds the lower part of the 30S subunit head. Binds mRNA in the 70S ribosome, positioning it for translation. The protein is Small ribosomal subunit protein uS3 of Sulfurovum sp. (strain NBC37-1).